A 213-amino-acid polypeptide reads, in one-letter code: MNDVYKCPVCGQLTESPTHCGVSAVKILDGAMRLKISKLLSLALRHSPSVLGLSLDKGGWADVKTALEGLRKAGIRADYEALYAVVALDEKGRFELKDGKIRARYGHTIDVEVEYEADSESKVLYHGTSRHLLPSIMAQGLLPMRRRYVHLSPDFATACQNARRRPLPVVIEIDAECLRARGYVVYAASGKVRLAKHVPPECLKKVVDCPTPS.

This sequence belongs to the KptA/TPT1 family.

Its function is as follows. Removes the 2'-phosphate from RNA via an intermediate in which the phosphate is ADP-ribosylated by NAD followed by a presumed transesterification to release the RNA and generate ADP-ribose 1''-2''-cyclic phosphate (APPR&gt;P). May function as an ADP-ribosylase. The chain is Probable RNA 2'-phosphotransferase from Pyrobaculum aerophilum (strain ATCC 51768 / DSM 7523 / JCM 9630 / CIP 104966 / NBRC 100827 / IM2).